Consider the following 269-residue polypeptide: Type 4 prepilin-like proteins leader peptide-processing enzyme (269 aa).

7 helical membrane-spanning segments follow: residues 13 to 33 (MPVL…VVIW), 102 to 122 (YPLV…VWPE), 124 to 144 (GWAL…VIDL), 147 to 167 (QWLP…AAWA), 178 to 198 (VTGV…AGIV), 210 to 230 (LLFA…VALI), and 249 to 269 (LPFG…QALF).

The protein belongs to the peptidase A24 family.

Its subcellular location is the cell inner membrane. It catalyses the reaction Typically cleaves a -Gly-|-Phe- bond to release an N-terminal, basic peptide of 5-8 residues from type IV prepilin, and then N-methylates the new N-terminal amino group, the methyl donor being S-adenosyl-L-methionine.. Functionally, cleaves type-4 fimbrial leader sequence and methylates the N-terminal (generally Phe) residue. This Escherichia coli O78:H11 (strain H10407 / ETEC) protein is Type 4 prepilin-like proteins leader peptide-processing enzyme.